The primary structure comprises 174 residues: Secreted protein A (174 aa).

The signal sequence occupies residues methionine 1–alanine 19. Asparagine 156 carries an N-linked (GlcNAc...) asparagine glycan.

Belongs to the Sct family. Post-translationally, probably contains disulfide bonds.

The protein localises to the secreted. The protein resides in the extracellular vesicle. The chain is Secreted protein A (p17) from Dictyostelium discoideum (Social amoeba).